Consider the following 278-residue polypeptide: Ferredoxin--NADP reductase A (278 aa).

The FAD-binding FR-type domain maps to 3-103 (PGYTEETVLE…KRATGTLTIG (101 aa)). Residues 52-55 (RAYS) and T118 contribute to the FAD site.

The protein belongs to the ferredoxin--NADP reductase type 1 family. FAD serves as cofactor.

It catalyses the reaction 2 reduced [4Fe-4S]-[ferredoxin] + NADP(+) + H(+) = 2 oxidized [4Fe-4S]-[ferredoxin] + NADPH. In terms of biological role, transports electrons between NADPH and ferredoxin. Can transfer electrons to ferredoxins Fdx2 and Fdx8. Prefers NADPH to NADH. The polypeptide is Ferredoxin--NADP reductase A (Sorangium cellulosum (strain So ce56) (Polyangium cellulosum (strain So ce56))).